The primary structure comprises 302 residues: Deoxyhypusine hydroxylase (302 aa).

HEAT-like PBS-type repeat units lie at residues Glu-23–Asp-49, Leu-54–Asp-80, Val-87–Asp-113, Asp-175–Asp-201, Phe-206–Asp-232, and Val-239–Asp-265. Residues His-56, Glu-57, His-89, and Glu-90 each contribute to the Fe cation site. His-208, Glu-209, His-241, and Glu-242 together coordinate Fe cation.

It belongs to the deoxyhypusine hydroxylase family. Fe(2+) serves as cofactor.

It localises to the endoplasmic reticulum membrane. The catalysed reaction is [eIF5A protein]-deoxyhypusine + AH2 + O2 = [eIF5A protein]-hypusine + A + H2O. It participates in protein modification; eIF5A hypusination. In terms of biological role, catalyzes the hydroxylation of the N(6)-(4-aminobutyl)-L-lysine intermediate to form hypusine, an essential post-translational modification only found in mature eIF-5A factor. Essential for organismal viability and plays a role in a wide number of important processes such as cell growth and proliferation, and regulates induction of autophagy and protein synthesis. Has a role in eIF-5A-mediated translational control. The polypeptide is Deoxyhypusine hydroxylase (Drosophila pseudoobscura pseudoobscura (Fruit fly)).